Consider the following 387-residue polypeptide: 3-ketoacyl-CoA thiolase (387 aa).

C91 (acyl-thioester intermediate) is an active-site residue. Active-site proton acceptor residues include H343 and C373.

Belongs to the thiolase-like superfamily. Thiolase family. Heterotetramer of two alpha chains (FadB) and two beta chains (FadA).

Its subcellular location is the cytoplasm. The catalysed reaction is an acyl-CoA + acetyl-CoA = a 3-oxoacyl-CoA + CoA. Its pathway is lipid metabolism; fatty acid beta-oxidation. Functionally, catalyzes the final step of fatty acid oxidation in which acetyl-CoA is released and the CoA ester of a fatty acid two carbons shorter is formed. The protein is 3-ketoacyl-CoA thiolase of Erwinia tasmaniensis (strain DSM 17950 / CFBP 7177 / CIP 109463 / NCPPB 4357 / Et1/99).